Consider the following 207-residue polypeptide: 3-isopropylmalate dehydratase small subunit (207 aa).

The protein belongs to the LeuD family. LeuD type 1 subfamily. As to quaternary structure, heterodimer of LeuC and LeuD.

The enzyme catalyses (2R,3S)-3-isopropylmalate = (2S)-2-isopropylmalate. It functions in the pathway amino-acid biosynthesis; L-leucine biosynthesis; L-leucine from 3-methyl-2-oxobutanoate: step 2/4. Functionally, catalyzes the isomerization between 2-isopropylmalate and 3-isopropylmalate, via the formation of 2-isopropylmaleate. The chain is 3-isopropylmalate dehydratase small subunit (leuD) from Buchnera aphidicola subsp. Acyrthosiphon pisum (strain APS) (Acyrthosiphon pisum symbiotic bacterium).